The chain runs to 98 residues: Bombyxin A-3 homolog (98 aa).

The first 18 residues, 1-18 (MRTQVLFLVLEVAAMASG), serve as a signal peptide directing secretion. 3 disulfide bridges follow: Cys26-Cys85, Cys38-Cys98, and Cys84-Cys89. Positions 47 to 75 (TPYTSSESEGYGWRWLAPQRARQLAGARG) are cleaved as a propeptide — c peptide like.

The protein belongs to the insulin family. Heterodimer of a B chain and an A chain linked by two disulfide bonds.

Its subcellular location is the secreted. In terms of biological role, brain peptide responsible for activation of prothoracic glands to produce ecdysone in insects. The protein is Bombyxin A-3 homolog (SBXA3) of Samia cynthia (Ailanthus silkmoth).